The chain runs to 70 residues: UPF0352 protein Sden_2336 (70 aa).

Belongs to the UPF0352 family.

The polypeptide is UPF0352 protein Sden_2336 (Shewanella denitrificans (strain OS217 / ATCC BAA-1090 / DSM 15013)).